The chain runs to 675 residues: Putative acyl-coenzyme A oxidase 3.2, peroxisomal (675 aa).

The transit peptide at 1-34 (MSENVELRRAHILANHILRSPRPSSNPSLTPEVC) directs the protein to the peroxisome. 442-457 (AVGGQGLKTENRVGHL) contacts FAD.

This sequence belongs to the acyl-CoA oxidase family. Requires FAD as cofactor.

It localises to the peroxisome. The catalysed reaction is a 2,3-saturated acyl-CoA + O2 = a (2E)-enoyl-CoA + H2O2. Catalyzes the desaturation of acyl-CoAs to 2-trans-enoyl-CoAs. This is Putative acyl-coenzyme A oxidase 3.2, peroxisomal (ACX3.2) from Arabidopsis thaliana (Mouse-ear cress).